The chain runs to 242 residues: Cysteine-rich venom protein helothermine (242 aa).

A signal peptide spans 1–19 (MILLSLYLCLAAMLHQSEG). The region spanning 41–169 (DKHNNLRRIV…TYKYYQVCQY (129 aa)) is the SCP domain. 8 disulfide bridges follow: Cys77/Cys155, Cys94/Cys170, Cys150/Cys167, Cys189/Cys196, Cys192/Cys201, Cys205/Cys237, Cys214/Cys231, and Cys223/Cys235. The 33-residue stretch at 205–237 (CKQNDVYNNCPDLKKQVGCGHPIMKDCMATCKC) folds into the ShKT domain.

It belongs to the CRISP family. Expressed by the venom gland.

It is found in the secreted. Functionally, alters a variety of ion channel activities, including voltage-gated potassium channels (Kv), voltage-gated calcium channels (L-, N-, and P-type) (Cav) and ryanodine receptors (RyR). Is toxic to mice (causes lethargy, partial paralysis of rear limbs and lowering of body temperature). The chain is Cysteine-rich venom protein helothermine from Heloderma horridum horridum (Mexican beaded lizard).